The chain runs to 181 residues: UPF0316 protein Bcer98_2136 (181 aa).

Transmembrane regions (helical) follow at residues 6 to 26, 32 to 52, and 58 to 78; these read LIFV…ILLV, SAAG…GIVF, and WMNI…GGYI.

The protein belongs to the UPF0316 family.

The protein resides in the cell membrane. In Bacillus cytotoxicus (strain DSM 22905 / CIP 110041 / 391-98 / NVH 391-98), this protein is UPF0316 protein Bcer98_2136.